A 466-amino-acid polypeptide reads, in one-letter code: ATP synthase subunit beta (466 aa).

Position 156-163 (156-163) interacts with ATP; sequence GGAGVGKT.

The protein belongs to the ATPase alpha/beta chains family. In terms of assembly, F-type ATPases have 2 components, CF(1) - the catalytic core - and CF(0) - the membrane proton channel. CF(1) has five subunits: alpha(3), beta(3), gamma(1), delta(1), epsilon(1). CF(0) has three main subunits: a(1), b(2) and c(9-12). The alpha and beta chains form an alternating ring which encloses part of the gamma chain. CF(1) is attached to CF(0) by a central stalk formed by the gamma and epsilon chains, while a peripheral stalk is formed by the delta and b chains.

It localises to the cell membrane. The enzyme catalyses ATP + H2O + 4 H(+)(in) = ADP + phosphate + 5 H(+)(out). In terms of biological role, produces ATP from ADP in the presence of a proton gradient across the membrane. The catalytic sites are hosted primarily by the beta subunits. The chain is ATP synthase subunit beta from Polynucleobacter asymbioticus (strain DSM 18221 / CIP 109841 / QLW-P1DMWA-1) (Polynucleobacter necessarius subsp. asymbioticus).